Here is a 210-residue protein sequence, read N- to C-terminus: Holliday junction resolvase RecU (210 aa).

Thr-93, Asp-95, Glu-108, and Gln-127 together coordinate Mg(2+).

The protein belongs to the RecU family. Mg(2+) serves as cofactor.

It localises to the cytoplasm. It catalyses the reaction Endonucleolytic cleavage at a junction such as a reciprocal single-stranded crossover between two homologous DNA duplexes (Holliday junction).. In terms of biological role, endonuclease that resolves Holliday junction intermediates in genetic recombination. Cleaves mobile four-strand junctions by introducing symmetrical nicks in paired strands. Promotes annealing of linear ssDNA with homologous dsDNA. Required for DNA repair, homologous recombination and chromosome segregation. The sequence is that of Holliday junction resolvase RecU from Lactobacillus helveticus (strain DPC 4571).